A 320-amino-acid chain; its full sequence is Eukaryotic translation initiation factor 3 subunit G (320 aa).

The disordered stretch occupies residues 1 to 25 (MPTGDFDSKPSWADQVEEEGEDDKC). A phosphoserine mark is found at serine 8 and serine 11. Residues threonine 38 and threonine 41 each carry the phosphothreonine modification. Residues serine 42, serine 189, serine 223, and serine 264 each carry the phosphoserine modification. The segment at 209-234 (KTGKYVPPSLRDGASRRGESMQPNRR) is disordered. Over residues 221–234 (GASRRGESMQPNRR) the composition is skewed to basic and acidic residues. One can recognise an RRM domain in the interval 239–317 (ATIRVTNLSE…LILNVEWAKP (79 aa)).

Belongs to the eIF-3 subunit G family. As to quaternary structure, component of the eukaryotic translation initiation factor 3 (eIF-3) complex, which is composed of 13 subunits: EIF3A, EIF3B, EIF3C, EIF3D, EIF3E, EIF3F, EIF3G, EIF3H, EIF3I, EIF3J, EIF3K, EIF3L and EIF3M. The eIF-3 complex appears to include 3 stable modules: module A is composed of EIF3A, EIF3B, EIF3G and EIF3I; module B is composed of EIF3F, EIF3H, and EIF3M; and module C is composed of EIF3C, EIF3D, EIF3E, EIF3K and EIF3L. EIF3C of module C binds EIF3B of module A and EIF3H of module B, thereby linking the three modules. EIF3J is a labile subunit that binds to the eIF-3 complex via EIF3B. The eIF-3 complex interacts with RPS6KB1 under conditions of nutrient depletion. Mitogenic stimulation leads to binding and activation of a complex composed of FRAP1 and RAPTOR, leading to phosphorylation and release of RPS6KB1 and binding of EIF4B to eIF-3. Interacts (via C-terminus) with AIFM1 (via N-terminus). Interacts with DHX33; the interaction is independent of RNA. In terms of processing, phosphorylated. Phosphorylation is enhanced upon serum stimulation.

The protein resides in the cytoplasm. It is found in the nucleus. It localises to the perinuclear region. RNA-binding component of the eukaryotic translation initiation factor 3 (eIF-3) complex, which is required for several steps in the initiation of protein synthesis. The eIF-3 complex associates with the 40S ribosome and facilitates the recruitment of eIF-1, eIF-1A, eIF-2:GTP:methionyl-tRNAi and eIF-5 to form the 43S pre-initiation complex (43S PIC). The eIF-3 complex stimulates mRNA recruitment to the 43S PIC and scanning of the mRNA for AUG recognition. The eIF-3 complex is also required for disassembly and recycling of post-termination ribosomal complexes and subsequently prevents premature joining of the 40S and 60S ribosomal subunits prior to initiation. The eIF-3 complex specifically targets and initiates translation of a subset of mRNAs involved in cell proliferation, including cell cycling, differentiation and apoptosis, and uses different modes of RNA stem-loop binding to exert either translational activation or repression. This subunit can bind 18S rRNA. The sequence is that of Eukaryotic translation initiation factor 3 subunit G from Bos taurus (Bovine).